A 140-amino-acid chain; its full sequence is MSKKWLNKVHWDDNGLVPVIVQEQGSNDVLMFAFMNREALQKTVESGEAVFWSRSRKRLWHKGEESGHIQKVHEIRLDCDEDVILLRVTQIGGIACHTGRHACFFQKFEGNVEDGDWHTVEPVLKNPDDIYAGKPGHNHE.

Aspartate 78 lines the Mg(2+) pocket. Cysteine 79 serves as a coordination point for Zn(2+). 2 residues coordinate Mg(2+): aspartate 80 and aspartate 82. Residues cysteine 96 and cysteine 103 each contribute to the Zn(2+) site.

This sequence belongs to the PRA-CH family. Homodimer. Requires Mg(2+) as cofactor. Zn(2+) serves as cofactor.

The protein localises to the cytoplasm. It catalyses the reaction 1-(5-phospho-beta-D-ribosyl)-5'-AMP + H2O = 1-(5-phospho-beta-D-ribosyl)-5-[(5-phospho-beta-D-ribosylamino)methylideneamino]imidazole-4-carboxamide. The protein operates within amino-acid biosynthesis; L-histidine biosynthesis; L-histidine from 5-phospho-alpha-D-ribose 1-diphosphate: step 3/9. In terms of biological role, catalyzes the hydrolysis of the adenine ring of phosphoribosyl-AMP. In Ralstonia pickettii (strain 12J), this protein is Phosphoribosyl-AMP cyclohydrolase.